We begin with the raw amino-acid sequence, 496 residues long: Flotillin-like protein 3 (496 aa).

C37 carries the S-palmitoyl cysteine lipid modification. Residues 301-328 (VVREAELQLEVERKNALRLTEKLKAEKL) are a coiled coil.

This sequence belongs to the band 7/mec-2 family. Flotillin subfamily. In terms of processing, may be palmitoylated.

Its subcellular location is the cell membrane. It localises to the membrane. The protein resides in the caveola. May act as a scaffolding protein within caveolar membranes, functionally participating in formation of caveolae or caveolae-like vesicles. This is Flotillin-like protein 3 (FLOT3) from Oryza sativa subsp. japonica (Rice).